Consider the following 156-residue polypeptide: Dynein 16 kDa light chain, flagellar outer arm (156 aa).

The Thioredoxin domain maps to 2 to 116 (AAGLPPVQYS…LNQQVLSLTP (115 aa)). A disulfide bridge links cysteine 37 with cysteine 40.

As to quaternary structure, consists of at least 3 heavy chains (alpha, beta and gamma), 2 intermediate chains and 8 light chains.

The protein resides in the cell projection. The protein localises to the cilium. It localises to the flagellum. It is found in the cytoplasm. Its subcellular location is the cytoskeleton. The protein resides in the flagellum axoneme. Its function is as follows. May be involved in regulating the redox state of functionally important thiol groups within dynein. The chain is Dynein 16 kDa light chain, flagellar outer arm from Chlamydomonas reinhardtii (Chlamydomonas smithii).